An 85-amino-acid polypeptide reads, in one-letter code: UPF0434 protein HNE_3545 (85 aa).

It belongs to the UPF0434 family.

In Hyphomonas neptunium (strain ATCC 15444), this protein is UPF0434 protein HNE_3545.